The following is a 106-amino-acid chain: 3-phenylpropionate/cinnamic acid dioxygenase ferredoxin subunit (106 aa).

A Rieske domain is found at 4-99; sequence IYACPVADVP…VHVEGGDIFI (96 aa). [2Fe-2S] cluster contacts are provided by Cys-42, His-44, Cys-62, and His-65.

This sequence belongs to the bacterial ring-hydroxylating dioxygenase ferredoxin component family. In terms of assembly, this dioxygenase system consists of four proteins: the two subunits of the hydroxylase component (HcaE and HcaF), a ferredoxin (HcaC) and a ferredoxin reductase (HcaD). [2Fe-2S] cluster serves as cofactor.

Its pathway is aromatic compound metabolism; 3-phenylpropanoate degradation. Part of the multicomponent 3-phenylpropionate dioxygenase, that converts 3-phenylpropionic acid (PP) and cinnamic acid (CI) into 3-phenylpropionate-dihydrodiol (PP-dihydrodiol) and cinnamic acid-dihydrodiol (CI-dihydrodiol), respectively. This protein seems to be a 2Fe-2S ferredoxin. The polypeptide is 3-phenylpropionate/cinnamic acid dioxygenase ferredoxin subunit (Escherichia coli O139:H28 (strain E24377A / ETEC)).